The primary structure comprises 2200 residues: Tyrosine-protein phosphatase Lar-like (2200 aa).

The signal sequence occupies residues 1–42 (MIQFRNKNNSMNRIARHLRNVARRKGSSLLLFLMLSTVLVAA). Asn-8 and Asn-116 each carry an N-linked (GlcNAc...) asparagine glycan. The Extracellular segment spans residues 43-1497 (KEDDPARLVV…LRGASQKSSP (1455 aa)). 3 Ig-like C2-type domains span residues 47–139 (PARL…ASLT), 151–240 (PQIE…KAAN), and 250–334 (PYFS…TTVI). 2 disulfide bridges follow: Cys-69–Cys-122 and Cys-172–Cys-225. Residues Asn-269 and Asn-315 are each glycosylated (N-linked (GlcNAc...) asparagine). Cys-272 and Cys-318 are disulfide-bonded. 9 consecutive Fibronectin type-III domains span residues 341–434 (PPVN…TKPS), 439–535 (APVS…TRQG), 539–628 (QPPM…TIAS), 633–748 (SPTI…TLED), 752–856 (APRN…IPPE), 857–956 (APEI…PVGS), 957–1053 (PDGE…PDPA), 1058–1158 (PPTN…NYMT), and 1181–1287 (MVQN…TGPP). The N-linked (GlcNAc...) asparagine glycan is linked to Asn-574. Residues Asn-945, Asn-988, Asn-1069, Asn-1141, Asn-1212, and Asn-1330 are each glycosylated (N-linked (GlcNAc...) asparagine). Residues 1355 to 1392 (LARSLSVSPSKKLKRKASEVGDDSQSASYHPKEKRARR) form a disordered region. The helical transmembrane segment at 1498 to 1518 (WVGACIAFLVLFSIVGMLICW) threads the bilayer. Residues 1519 to 2200 (WLRCNKKSAG…EYLAAYDNFS (682 aa)) are Cytoplasmic-facing. 2 consecutive Tyrosine-protein phosphatase domains span residues 1647-1902 (FQSE…VLDA) and 1933-2192 (IDME…AYEY). Residues Asp-1811, 1843–1849 (CSAGIGR), and Gln-1887 each bind substrate. The active-site Phosphocysteine intermediate is Cys-1843. Residue Cys-2133 is the Phosphocysteine intermediate of the active site.

This sequence belongs to the protein-tyrosine phosphatase family. Receptor class 2A subfamily. Both isoforms are ubiquitously expressed in early embryos. In later embryos, larvae and adults expression is highest in the nerve ring, dorsal cord, ventral cord and epithelial tissues.

It is found in the cell junction. The protein resides in the adherens junction. It localises to the cell membrane. The enzyme catalyses O-phospho-L-tyrosyl-[protein] + H2O = L-tyrosyl-[protein] + phosphate. Functionally, has a role in early neural and epidermal development; neuroblast movements during closure of the gastrulation cleft and epidermal morphogenesis. Vab-1 and ptp-3 may function redundantly within the same sets of neuronal precursors. The sequence is that of Tyrosine-protein phosphatase Lar-like (ptp-3) from Caenorhabditis elegans.